The primary structure comprises 271 residues: Urease accessory protein UreD (271 aa).

It belongs to the UreD family. As to quaternary structure, ureD, UreF and UreG form a complex that acts as a GTP-hydrolysis-dependent molecular chaperone, activating the urease apoprotein by helping to assemble the nickel containing metallocenter of UreC. The UreE protein probably delivers the nickel.

The protein resides in the cytoplasm. Functionally, required for maturation of urease via the functional incorporation of the urease nickel metallocenter. The polypeptide is Urease accessory protein UreD (Azorhizobium caulinodans (strain ATCC 43989 / DSM 5975 / JCM 20966 / LMG 6465 / NBRC 14845 / NCIMB 13405 / ORS 571)).